A 456-amino-acid chain; its full sequence is N(6)-adenosine-methyltransferase non-catalytic subunit METTL14 (456 aa).

Residues 43 to 74 (EIAETRETSRASYDTSAAVSKRKLPEEGKADE) form a disordered region. The segment covering 65–74 (KLPEEGKADE) has biased composition (basic and acidic residues). Interaction with METTL3 stretches follow at residues 135–136 (RD) and 237–238 (SG). A positively charged region required for RNA-binding region spans residues 245-254 (RMCLRKWGFR). Interaction with METTL3 regions lie at residues 255 to 258 (RSED) and 278 to 287 (KAIFQRTKEH). Residues 297–298 (HR) are positively charged region required for RNA-binding. Positions 308-312 (NVDID) are interaction with METTL3. Residues 395–456 (LRPKTPPPKS…GPHRGVFAPR (62 aa)) form a disordered region. The segment covering 410 to 421 (ASRGGGRGGASA) has biased composition (gly residues). A compositionally biased stretch (basic and acidic residues) spans 423–441 (RGERGRERNRGSFRGDRGN).

It belongs to the MT-A70-like family. In terms of assembly, heterodimer; heterodimerizes with mettl3 to form an antiparallel heterodimer that constitutes an active methyltransferase. Component of the WMM complex, a N6-methyltransferase complex composed of a catalytic subcomplex, named MAC, and of an associated subcomplex, named MACOM. The MAC subcomplex is composed of mettl3 and mettl14.

Its subcellular location is the nucleus. Its function is as follows. The METTL3-METTL14 heterodimer forms a N6-methyltransferase complex that methylates adenosine residues at the N(6) position of some mRNAs and regulates the circadian clock, differentiation of embryonic stem cells and cortical neurogenesis. In the heterodimer formed with mettl3, mettl14 constitutes the RNA-binding scaffold that recognizes the substrate rather than the catalytic core. N6-methyladenosine (m6A), which takes place at the 5'-[AG]GAC-3' consensus sites of some mRNAs, plays a role in mRNA stability and processing. The sequence is that of N(6)-adenosine-methyltransferase non-catalytic subunit METTL14 (mettl14) from Xenopus laevis (African clawed frog).